Here is a 208-residue protein sequence, read N- to C-terminus: Small ribosomal subunit protein uS5 (208 aa).

Residues 1–19 (MTDSNNQSPNKKTSGSSGA) show a composition bias toward polar residues. Residues 1–54 (MTDSNNQSPNKKTSGSSGAPTAADGRQENRRSRGEKRGGRRDRRGQERDSEWQE) are disordered. Basic and acidic residues-rich tracts occupy residues 25–37 (GRQE…GEKR) and 44–54 (RGQERDSEWQE). Residues 52–115 (WQERVVQIRR…ADGKKHLVRV (64 aa)) enclose the S5 DRBM domain.

It belongs to the universal ribosomal protein uS5 family. In terms of assembly, part of the 30S ribosomal subunit. Contacts proteins S4 and S8.

With S4 and S12 plays an important role in translational accuracy. Its function is as follows. Located at the back of the 30S subunit body where it stabilizes the conformation of the head with respect to the body. The polypeptide is Small ribosomal subunit protein uS5 (Prochlorococcus marinus (strain NATL1A)).